A 165-amino-acid chain; its full sequence is UPF0254 protein MMP0935 (165 aa).

It belongs to the UPF0254 family.

The protein is UPF0254 protein MMP0935 of Methanococcus maripaludis (strain DSM 14266 / JCM 13030 / NBRC 101832 / S2 / LL).